Consider the following 402-residue polypeptide: Succinylornithine transaminase (402 aa).

At Lys252 the chain carries N6-(pyridoxal phosphate)lysine.

The protein belongs to the class-III pyridoxal-phosphate-dependent aminotransferase family. AstC subfamily. The cofactor is pyridoxal 5'-phosphate.

The catalysed reaction is N(2)-succinyl-L-ornithine + 2-oxoglutarate = N-succinyl-L-glutamate 5-semialdehyde + L-glutamate. The protein operates within amino-acid degradation; L-arginine degradation via AST pathway; L-glutamate and succinate from L-arginine: step 3/5. In terms of biological role, catalyzes the transamination of N(2)-succinylornithine and alpha-ketoglutarate into N(2)-succinylglutamate semialdehyde and glutamate. Can also act as an acetylornithine aminotransferase. This is Succinylornithine transaminase from Photorhabdus laumondii subsp. laumondii (strain DSM 15139 / CIP 105565 / TT01) (Photorhabdus luminescens subsp. laumondii).